The sequence spans 196 residues: Protein TEX261 (196 aa).

Transmembrane regions (helical) follow at residues 3 to 23, 42 to 62, 70 to 90, 97 to 117, and 125 to 145; these read FMYL…TLAV, SRII…LYVF, IGVG…FPFI, FILS…FFAE, and VLAY…VSLS.

Belongs to the SVP26 family.

It is found in the membrane. In Homo sapiens (Human), this protein is Protein TEX261 (TEX261).